We begin with the raw amino-acid sequence, 513 residues long: Cyclin-dependent kinase C-2 (513 aa).

A Protein kinase domain is found at 26-325 (FEKLEQIGEG…AKDALDAEYF (300 aa)). ATP contacts are provided by residues 32-40 (IGEGTYGQV) and Lys-55. Position 37 is a phosphotyrosine (Tyr-37). Residue Asp-164 is the Proton acceptor of the active site. Thr-198 bears the Phosphothreonine mark. The disordered stretch occupies residues 337–513 (LPTYESSHEF…ARNQQYGWQP (177 aa)). Low complexity predominate over residues 395–404 (AGPNHPMNNN). The span at 434-448 (SGNQTGGYNNQSRGG) shows a compositional bias: polar residues. Composition is skewed to gly residues over residues 461-476 (APYG…GYGV) and 483-496 (QGGG…GSGR).

Belongs to the protein kinase superfamily. CMGC Ser/Thr protein kinase family. CDC2/CDKX subfamily. Interacts with CYCT1-3. As to expression, highly expressed in flowers. Expressed in seedlings, roots, rosettes and stems.

It carries out the reaction L-seryl-[protein] + ATP = O-phospho-L-seryl-[protein] + ADP + H(+). It catalyses the reaction L-threonyl-[protein] + ATP = O-phospho-L-threonyl-[protein] + ADP + H(+). The enzyme catalyses [DNA-directed RNA polymerase] + ATP = phospho-[DNA-directed RNA polymerase] + ADP + H(+). The chain is Cyclin-dependent kinase C-2 (CDKC-2) from Arabidopsis thaliana (Mouse-ear cress).